Reading from the N-terminus, the 962-residue chain is Spliceosome associated factor 3, U4/U6 recycling protein (962 aa).

Residues 1–21 are compositionally biased toward low complexity; that stretch reads MATTAASSASEPEVEPQAGPE. Residues 1 to 92 are disordered; that stretch reads MATTAASSAS…EDEWEYDEEE (92 aa). N-acetylalanine is present on A2. The tract at residues 2-352 is mediates interaction with PRPF3; sequence ATTAASSASE…LVPDLWIRYS (351 aa). Phosphoserine is present on S10. The span at 81 to 92 shows a compositional bias: acidic residues; the sequence is AGEDEWEYDEEE. HAT repeat units follow at residues 127–159, 165–196, 202–238, 243–276, 325–357, 360–392, 395–431, 441–474, and 488–521; these read GELSRVRAARQKMSELFPLTEELWLEWLHDEIS, LDREHVYELFERAVKDYICPNIWLEYGQYSVG, GGLEKVRSVFERALSSVGLHMTKGLAIWEAYREFESA, ARLEKVHSLFRRQLAIPLYEMEATFAEYEEWSEE, GDPARIQLIFERALVENCLVPDLWIRYSQYLDR, KVKDLVLSVHSRAVRNCPWTVALWSRYLLAMER, LDHQTISATFENALSAGFIQATDYVEIWQVYLDYLRR, KELEELRSMFTRALEYLQQEVEERFSESGDPSCL, and NNMQKARELWDSIMTRGNAKYANMWLEYYNLERA. S216 is modified (phosphoserine). The interval 488-521 is required for interaction with USP4; sequence NNMQKARELWDSIMTRGNAKYANMWLEYYNLERA. The tract at residues 538-952 is necessary and sufficient for U6 snRNA binding; the sequence is CTSDYPEHVC…VATEAPKMSN (415 aa). Positions 559 to 618 form a coiled coil; sequence TLEDWDLAIQKTETRLARVNEQRMKAAEKEAALVQQEEEKAEQRKKVRAEKKALKKKKKT. The segment covering 591–602 has biased composition (basic and acidic residues); sequence LVQQEEEKAEQR. The disordered stretch occupies residues 591–696; that stretch reads LVQQEEEKAE…SLKRDMPKVA (106 aa). A required for nuclear localization region spans residues 601 to 670; the sequence is QRKKVRAEKK…KEETELSGKC (70 aa). The Nuclear localization signal signature appears at 602–609; sequence RKKVRAEK. Residues 603–618 are compositionally biased toward basic residues; the sequence is KKVRAEKKALKKKKKT. Positions 627 to 640 are enriched in acidic residues; that stretch reads DEDEENEWGEEEEE. S651 is subject to Phosphoserine. Over residues 680-696 the composition is skewed to basic and acidic residues; the sequence is KQKEKAASLKRDMPKVA. The 79-residue stretch at 704–782 folds into the RRM 1 domain; that stretch reads VTVFVSNLPY…RPMFVSPCVD (79 aa). Residues S795 and S852 each carry the phosphoserine modification. Residues 801-878 enclose the RRM 2 domain; it reads HKLFISGLPF…NVIKVAISNP (78 aa). The interval 880 to 962 is disordered; the sequence is QRKVPEKPEV…ADFAKLLLRK (83 aa). R906 carries the omega-N-methylarginine modification.

As to quaternary structure, component of the 7SK snRNP complex at least composed of P-TEFb (composed of CDK9 and CCNT1/cyclin-T1), HEXIM1, HEXIM2, BCDIN3, SART3 proteins and 7SK and U6 snRNAs. Interacts with AGO1 and AGO2. Interacts with PRPF3 and USP4; the interaction with PRPF3 is direct and recruits USP4 to its substrate PRPF3. Interacts with USP15; the interaction is direct. Ubiquitously expressed, with low level of expression in liver, heart and skeletal. Also detected in hematopoietic cells (at protein level).

It is found in the nucleus. Its subcellular location is the nucleoplasm. The protein localises to the cajal body. The protein resides in the nucleus speckle. It localises to the cytoplasm. U6 snRNP-binding protein that functions as a recycling factor of the splicing machinery. Promotes the initial reassembly of U4 and U6 snRNPs following their ejection from the spliceosome during its maturation. Also binds U6atac snRNPs and may function as a recycling factor for U4atac/U6atac spliceosomal snRNP, an initial step in the assembly of U12-type spliceosomal complex. The U12-type spliceosomal complex plays a role in the splicing of introns with non-canonical splice sites. May also function as a substrate-targeting factor for deubiquitinases like USP4 and USP15. Recruits USP4 to ubiquitinated PRPF3 within the U4/U5/U6 tri-snRNP complex, promoting PRPF3 deubiquitination and thereby regulating the spliceosome U4/U5/U6 tri-snRNP spliceosomal complex disassembly. May also recruit the deubiquitinase USP15 to histone H2B and mediate histone deubiquitination, thereby regulating gene expression and/or DNA repair. May play a role in hematopoiesis probably through transcription regulation of specific genes including MYC. The protein is Spliceosome associated factor 3, U4/U6 recycling protein of Mus musculus (Mouse).